The sequence spans 86 residues: Anti-adapter protein IraP (86 aa).

Positions 1-47 form a coiled coil; sequence MKNLIAELLLKLAQKEEESKELVAQVEALEIIVTAMLRNMAQSEQQM.

The protein belongs to the IraP family. Interacts with RssB.

The protein localises to the cytoplasm. Functionally, inhibits RpoS proteolysis by regulating RssB activity, thereby increasing the stability of the sigma stress factor RpoS especially during phosphate and magnesium starvation, but also in stationary phase and during nitrogen starvation. Its effect on RpoS stability is due to its interaction with RssB, which probably blocks the interaction of RssB with RpoS, and the consequent delivery of the RssB-RpoS complex to the ClpXP protein degradation pathway. This Salmonella arizonae (strain ATCC BAA-731 / CDC346-86 / RSK2980) protein is Anti-adapter protein IraP.